A 501-amino-acid polypeptide reads, in one-letter code: Cytochrome P450 90A4 (501 aa).

A helical membrane pass occupies residues 2-22 (AAAALLLLAAAAAAVVVAMAL). Cys446 is a heme binding site.

The protein belongs to the cytochrome P450 family. Requires heme as cofactor.

Its subcellular location is the membrane. It functions in the pathway plant hormone biosynthesis; brassinosteroid biosynthesis. Functionally, catalyzes the C23-alpha-hydroxylation step in brassinosteroid biosynthesis. Converts 6-deoxocathasterone to 6-deoxoteasterone in the late C6-oxidation pathway and cathasterone to teasterone (TE) in the early C6-oxidation pathway of brassinolide (BL) biosynthesis. The sequence is that of Cytochrome P450 90A4 from Oryza sativa subsp. indica (Rice).